Reading from the N-terminus, the 1563-residue chain is Galactose-specific cell agglutination protein gsf2 (1563 aa).

A signal peptide spans 1–27; it reads MSVRRFLSTSARALLFTAALLPSLTSG. A run of 29 repeats spans residues 203–280, 281–358, 359–436, 437–514, 515–592, 593–670, 671–750, 751–825, 826–869, 870–913, 914–957, 958–1001, 1002–1045, 1046–1089, 1090–1133, 1134–1140, 1141–1162, 1163–1184, 1185–1200, 1201–1221, 1223–1244, 1245–1266, 1267–1282, 1283–1304, 1305–1326, 1327–1348, 1349–1364, 1365–1386, and 1387–1397. The 8 X 78 AA approximate tandem repeats stretch occupies residues 203 to 825; the sequence is TTTTTVGYPG…IPTGTTGTTT (623 aa). N-linked (GlcNAc...) asparagine glycosylation is found at asparagine 224, asparagine 263, asparagine 302, asparagine 341, asparagine 380, asparagine 419, asparagine 458, asparagine 497, asparagine 536, asparagine 575, asparagine 614, and asparagine 653. The N-linked (GlcNAc...) asparagine glycan is linked to asparagine 784. The tract at residues 826–1140 is 8 X 44 AA approximate tandem repeats; it reads VVIQTPTTVT…TTTVVINTPT (315 aa). The interval 1135-1393 is disordered; that stretch reads VINTPTTTGS…TQVTTATEVQ (259 aa). A 13 X 22 AA approximate tandem repeats region spans residues 1141 to 1397; it reads TTGSEVLPTT…TATEVQPTTA (257 aa). 4 N-linked (GlcNAc...) asparagine glycosylation sites follow: asparagine 1510, asparagine 1516, asparagine 1529, and asparagine 1532. Serine 1539 carries GPI-anchor amidated serine lipidation. Residues 1540 to 1563 constitute a propeptide, removed in mature form; sequence SAGANKPIAYLTFVSLFVYIVTLI.

The protein belongs to the mam3/map4 family.

Its subcellular location is the cell membrane. Functionally, galactose-specific adhesion protein essential for non-sexual flocculation and filamentous growth. Required for adhesion and filamentous growth through recognition of galactose residues on cell surface glycoconjugates. Induces flocculation when overexpressed. The protein is Galactose-specific cell agglutination protein gsf2 of Schizosaccharomyces pombe (strain 972 / ATCC 24843) (Fission yeast).